A 404-amino-acid polypeptide reads, in one-letter code: Phosphoglycerate kinase (404 aa).

Substrate-binding positions include 21–23, Arg36, 59–62, Arg119, and Arg162; these read DFN and HLGR. ATP is bound by residues Lys213, Gly300, Glu331, and 360–363; that span reads GGDS.

This sequence belongs to the phosphoglycerate kinase family. Monomer.

The protein resides in the cytoplasm. The enzyme catalyses (2R)-3-phosphoglycerate + ATP = (2R)-3-phospho-glyceroyl phosphate + ADP. Its pathway is carbohydrate degradation; glycolysis; pyruvate from D-glyceraldehyde 3-phosphate: step 2/5. The protein is Phosphoglycerate kinase of Oenococcus oeni (strain ATCC BAA-331 / PSU-1).